The primary structure comprises 355 residues: WAT1-related protein At3g28130 (355 aa).

Transmembrane regions (helical) follow at residues 11–31 (AVLL…NTLF), 42–62 (YTFL…SHIF), 80–100 (IGVL…GIEY), 104–124 (TLAS…AIIF), 136–156 (SVAK…VVLY), 186–206 (WIIG…AFIL), 218–238 (FTVS…IGIV), 244–264 (PSIW…GGIF), 290–310 (LSIL…FYLG), and 311–331 (SLVG…GKAK). The EamA domain maps to 29–154 (TLFKAATSKG…VSLVGALVVV (126 aa)).

Belongs to the drug/metabolite transporter (DMT) superfamily. Plant drug/metabolite exporter (P-DME) (TC 2.A.7.4) family.

Its subcellular location is the membrane. This chain is WAT1-related protein At3g28130, found in Arabidopsis thaliana (Mouse-ear cress).